A 553-amino-acid polypeptide reads, in one-letter code: 3-amino-2-hydroxy-4-methoxybenzoate diazotase (553 aa).

The span at 157–167 (ALPAAGATGPA) shows a compositional bias: low complexity. A disordered region spans residues 157–178 (ALPAAGATGPAREGDAPPPAPV).

It belongs to the ATP-dependent AMP-binding enzyme family.

It carries out the reaction 3-amino-2-hydroxy-4-methoxybenzoate + nitrite + ATP = cremeomycin + AMP + diphosphate + H2O. Its pathway is antibiotic biosynthesis. Part of a gene cluster involved in the biosynthesis of cremeomycin, a light-sensitive o-diazoquinone with antibacterial and antiproliferative effects. Catalyzes the last step of cremeomycin biosynthesis, the diazotization of 3-amino-2-hydroxy-4-methoxybenzoate (3,2,4-AHMBA) with nitrite to generate cremeomycin. This is 3-amino-2-hydroxy-4-methoxybenzoate diazotase from Streptomyces cremeus.